Consider the following 409-residue polypeptide: F-box/kelch-repeat protein At1g48625 (409 aa).

In terms of domain architecture, F-box spans 2-49 (ATMISNLPRDLMEEILSRVPLKSMRAVRLTCKNWHTLSITISESLAKM). 2 Kelch repeats span residues 169 to 218 (FIDY…LKGN) and 221 to 266 (WCAR…ILSC).

The sequence is that of F-box/kelch-repeat protein At1g48625 from Arabidopsis thaliana (Mouse-ear cress).